A 459-amino-acid polypeptide reads, in one-letter code: Putrescine aminotransferase (459 aa).

Residues 150-151 (GT) and Q274 contribute to the pyridoxal 5'-phosphate site. K300 carries the post-translational modification N6-(pyridoxal phosphate)lysine. Position 332 (T332) interacts with pyridoxal 5'-phosphate.

The protein belongs to the class-III pyridoxal-phosphate-dependent aminotransferase family. Putrescine aminotransferase subfamily. It depends on pyridoxal 5'-phosphate as a cofactor.

The catalysed reaction is an alkane-alpha,omega-diamine + 2-oxoglutarate = an omega-aminoaldehyde + L-glutamate. It carries out the reaction putrescine + 2-oxoglutarate = 1-pyrroline + L-glutamate + H2O. It catalyses the reaction cadaverine + 2-oxoglutarate = 5-aminopentanal + L-glutamate. It participates in amine and polyamine degradation; putrescine degradation; 4-aminobutanal from putrescine (transaminase route): step 1/1. Catalyzes the aminotransferase reaction from putrescine to 2-oxoglutarate, leading to glutamate and 4-aminobutanal, which spontaneously cyclizes to form 1-pyrroline. This is the first step in one of two pathways for putrescine degradation, where putrescine is converted into 4-aminobutanoate (gamma-aminobutyrate or GABA) via 4-aminobutanal. Also functions as a cadaverine transaminase in a a L-lysine degradation pathway to succinate that proceeds via cadaverine, glutarate and L-2-hydroxyglutarate. This Klebsiella pneumoniae subsp. pneumoniae (strain ATCC 700721 / MGH 78578) protein is Putrescine aminotransferase.